The following is a 54-amino-acid chain: UPF0391 membrane protein BAB1_1670 (54 aa).

2 helical membrane passes run 5–25 (VLVF…GIAG) and 29–48 (GIAQ…SLIA).

The protein belongs to the UPF0391 family.

It localises to the cell membrane. This Brucella abortus (strain 2308) protein is UPF0391 membrane protein BAB1_1670.